We begin with the raw amino-acid sequence, 64 residues long: Large ribosomal subunit protein bL35 (64 aa).

Basic residues predominate over residues Met-1–Arg-15. The segment at Met-1 to Gly-20 is disordered.

It belongs to the bacterial ribosomal protein bL35 family.

The chain is Large ribosomal subunit protein bL35 from Nocardioides sp. (strain ATCC BAA-499 / JS614).